Here is a 241-residue protein sequence, read N- to C-terminus: Phosphoribosylaminoimidazole-succinocarboxamide synthase (241 aa).

It belongs to the SAICAR synthetase family.

The enzyme catalyses 5-amino-1-(5-phospho-D-ribosyl)imidazole-4-carboxylate + L-aspartate + ATP = (2S)-2-[5-amino-1-(5-phospho-beta-D-ribosyl)imidazole-4-carboxamido]succinate + ADP + phosphate + 2 H(+). It functions in the pathway purine metabolism; IMP biosynthesis via de novo pathway; 5-amino-1-(5-phospho-D-ribosyl)imidazole-4-carboxamide from 5-amino-1-(5-phospho-D-ribosyl)imidazole-4-carboxylate: step 1/2. In Lacticaseibacillus paracasei (strain ATCC 334 / BCRC 17002 / CCUG 31169 / CIP 107868 / KCTC 3260 / NRRL B-441) (Lactobacillus paracasei), this protein is Phosphoribosylaminoimidazole-succinocarboxamide synthase.